A 254-amino-acid chain; its full sequence is NAD-dependent glycerol dehydrogenase (254 aa).

Residue valine 18–lysine 47 participates in NAD(+) binding. Tyrosine 160 serves as the catalytic Proton acceptor. Lysine 164 provides a ligand contact to NAD(+).

The protein belongs to the short-chain dehydrogenases/reductases (SDR) family. The cofactor is Mg(2+). Requires Mn(2+) as cofactor.

The protein localises to the cytoplasm. It carries out the reaction glycerol + NAD(+) = dihydroxyacetone + NADH + H(+). Inhibited by Zn(2+). In terms of biological role, involved in the glycerol metabolism. Catalyzes the NAD-dependent oxidation of glycerol to dihydroxyacetone (glycerone). GolD specifically uses NAD. The sequence is that of NAD-dependent glycerol dehydrogenase from Listeria innocua serovar 6a (strain ATCC BAA-680 / CLIP 11262).